A 405-amino-acid polypeptide reads, in one-letter code: MEPQSQSMTLEVPLSLGRYHISEEYGFLLPNPLEALPDHYKPWMEIALRLPHLIENRQLRAHVYRMPLLDCRFLKSYREQRLAHMALAAITMGFVWQEGEGQPQKVLPRSLAIPFVEVSRNLGLPPILVHSDLVLTNWTKRNPEGPLEISNLETIISFPGGESLRGFILVTVLVEKAAVPGLKALVQGMEAIRQHSQDTLLEALQQLRLSIQDITRALAQMHDYVDPDIFYSVIRIFLSGWKDNPAMPVGLVYEGVATEPLKYSGGSAAQSSVLHAFDEFLGIEHCKESVGFLHRMRDYMPPSHKAFLEDLHVAPSLRDYILASGPGDCLMAYNQCVEALGELRSYHINVVARYIISAATRARSRGLTNPSPHALEDRGTGGTAMLSFLKSVREKTMEALLCPGA.

His-347 contacts heme.

This sequence belongs to the indoleamine 2,3-dioxygenase family. Requires heme as cofactor. In terms of tissue distribution, expressed mainly in antigen-presenting immune cells, liver, kidney, brain, and placenta. Highly expressed in kidney, followed by epididymis and liver (at protein level). Detected in the tails of the spermatozoa in the testis and in the kidney tubules (at protein level). Constitutively expressed in brain.

The catalysed reaction is L-tryptophan + O2 = N-formyl-L-kynurenine. Its pathway is amino-acid degradation; L-tryptophan degradation via kynurenine pathway; L-kynurenine from L-tryptophan: step 1/2. Activity is inhibited by D-1MT (1-methyl-D-tryptophan) and MTH-trp (methylthiohydantoin-DL-tryptophan) but not L-1MT (1-methyl-L-tryptophan). In terms of biological role, catalyzes the first and rate-limiting step in the kynurenine pathway of tryptophan catabolism. Involved in immune regulation. This chain is Indoleamine 2,3-dioxygenase 2, found in Mus musculus (Mouse).